Reading from the N-terminus, the 758-residue chain is 5-methyltetrahydropteroyltriglutamate--homocysteine methyltransferase (758 aa).

5-methyltetrahydropteroyltri-L-glutamate is bound by residues 16-19 and Lys116; that span reads RELK. L-homocysteine contacts are provided by residues 436–438 and Glu489; that span reads IGS. L-methionine is bound by residues 436-438 and Glu489; that span reads IGS. 5-methyltetrahydropteroyltri-L-glutamate-binding positions include 520–521 and Trp566; that span reads RC. Asp604 is a binding site for L-homocysteine. Asp604 is a binding site for L-methionine. Glu610 contacts 5-methyltetrahydropteroyltri-L-glutamate. Zn(2+)-binding residues include His646, Cys648, and Glu670. Catalysis depends on His699, which acts as the Proton donor. Cys731 is a Zn(2+) binding site.

The protein belongs to the vitamin-B12 independent methionine synthase family. It depends on Zn(2+) as a cofactor.

The enzyme catalyses 5-methyltetrahydropteroyltri-L-glutamate + L-homocysteine = tetrahydropteroyltri-L-glutamate + L-methionine. It functions in the pathway amino-acid biosynthesis; L-methionine biosynthesis via de novo pathway; L-methionine from L-homocysteine (MetE route): step 1/1. Catalyzes the transfer of a methyl group from 5-methyltetrahydrofolate to homocysteine resulting in methionine formation. The chain is 5-methyltetrahydropteroyltriglutamate--homocysteine methyltransferase from Xylella fastidiosa (strain M12).